We begin with the raw amino-acid sequence, 973 residues long: Sensor histidine kinase TmoS (973 aa).

One can recognise a PAS 1 domain in the interval 32–103 (REELARIIFD…NQKRLVEAAS (72 aa)). The PAC 1 domain maps to 108–162 (VRCDIEILGKSGGREVIAVDFSLLPIRDEQENIVFLLAEGRNITDKKKAEAMLAL). The Histidine kinase 1 domain maps to 187–405 (KVSHELRTPL…LFQVKLPLNA (219 aa)). At His190 the chain carries Phosphohistidine; by autocatalysis. The Response regulatory domain maps to 452 to 567 (RVLIVEDNPD…ELRARVSNLI (116 aa)). Asp500 is modified (4-aspartylphosphate). The PAS 2 domain occupies 611 to 681 (SEARWKAVYE…QRLARLLQSG (71 aa)). The 53-residue stretch at 685–737 (YSVECSYLCKNGSTIWANASVSLMSPRVDEPQVILQIIDDITEKKQAQETLNQ) folds into the PAC 2 domain. The region spanning 757–973 (YIAHEINQPL…ACFFVSIPVS (217 aa)) is the Histidine kinase 2 domain. Position 760 is a phosphohistidine (His760).

In terms of processing, autophosphorylated. Activation requires a sequential transfer of a phosphate group from a His in the primary transmitter domain, to an Asp in the receiver domain and to a His in the secondary transmitter domain.

It is found in the cytoplasm. The enzyme catalyses ATP + protein L-histidine = ADP + protein N-phospho-L-histidine.. Its activity is regulated as follows. Activity is regulated by agonists and antagonists. Binding of agonists such as toluene or benzene to TmoS stimulates autophosphorylation. Toluene causes the most pronounced increase, followed by benzene, chlorobenzene and ethylbenzene. Activity is inhibited by antagonists such as o-xylene, o-chlorotoluene and trimethylbenzene isomers, which bind to TmoS but do not stimulate autophosphorylation. Member of the two-component regulatory system TmoS/TmoT involved in the regulation of toluene degradation. Probably phosphorylates TmoT via a four-step phosphorelay in response to toluene. Can also be induced by benzene and ethylbenzene. The polypeptide is Sensor histidine kinase TmoS (tmoS) (Ectopseudomonas mendocina (Pseudomonas mendocina)).